A 190-amino-acid polypeptide reads, in one-letter code: B3 domain-containing protein At4g01580 (190 aa).

The interval 1 to 25 is disordered; that stretch reads MVITRNMKARATSVSHRQSQQDPES. The span at 12–23 shows a compositional bias: polar residues; the sequence is TSVSHRQSQQDP. Positions 29-122 form a DNA-binding region, TF-B3; sequence KFFKLVLPST…SFRVIIFNAS (94 aa).

The protein resides in the nucleus. In Arabidopsis thaliana (Mouse-ear cress), this protein is B3 domain-containing protein At4g01580.